We begin with the raw amino-acid sequence, 544 residues long: Membrane protein insertase YidC (544 aa).

A run of 5 helical transmembrane segments spans residues 15–35, 321–341, 343–363, 409–429, and 506–526; these read LFLIGLFMLINDIFSSIMLSF, LWYLIQVPMQMVMQVFYDVIP, WGLSIIFLTIVVRILIFPLTF, LGGCFPVILQLPIFFALYSLV, and MPIMFFFILYNMPSGLLIYWI.

Belongs to the OXA1/ALB3/YidC family. Type 1 subfamily. In terms of assembly, interacts with the Sec translocase complex via SecD. Specifically interacts with transmembrane segments of nascent integral membrane proteins during membrane integration.

It is found in the cell inner membrane. Required for the insertion and/or proper folding and/or complex formation of integral membrane proteins into the membrane. Involved in integration of membrane proteins that insert both dependently and independently of the Sec translocase complex, as well as at least some lipoproteins. Aids folding of multispanning membrane proteins. The sequence is that of Membrane protein insertase YidC from Borrelia garinii subsp. bavariensis (strain ATCC BAA-2496 / DSM 23469 / PBi) (Borreliella bavariensis).